The chain runs to 355 residues: MAGLAPEGSQFDARQYDAKMTELLGTEQEEFFTSYDEVYDSFDAMGLQENLLRGIYAYGFEKPSAIQQRGIVPFCKGLDVIQQAQSGTGKTATFCSGVLQQLDYSLVECQALVLAPTRELAQQIEKVMRALGDYLGVKVHACVGGTSVREDQRILQSGVHVVVGTPGRVFDMLRRQSLRPDHIKMFVLDEADEMLSRGFKDQIYDIFQLLPPKIQVGVFSATMPPEALEITRKFMNQPVRILVKRDDVTLEGIKQFYVNVDKEEWKLETLCDLYETLAITQSVIFVNTRRKVDWLTDKMRSRDHTVSATHGDMDQNTRDIIMREFRSGSSRVLITTDLLARGIDVQQVSLVINYD.

A Q motif motif is present at residues 40 to 68; the sequence is DSFDAMGLQENLLRGIYAYGFEKPSAIQQ. The Helicase ATP-binding domain maps to 71-241; the sequence is IVPFCKGLDV…RKFMNQPVRI (171 aa). 84 to 91 lines the ATP pocket; sequence AQSGTGKT. Positions 189–192 match the DEAD box motif; sequence DEAD. A Helicase C-terminal domain is found at 252–355; that stretch reads GIKQFYVNVD…QQVSLVINYD (104 aa).

It belongs to the DEAD box helicase family. eIF4A subfamily. EIF4F is a multi-subunit complex, the composition of which varies with external and internal environmental conditions. It is composed of at least EIF4A, EIF4E and EIF4G.

It catalyses the reaction ATP + H2O = ADP + phosphate + H(+). Its function is as follows. ATP-dependent RNA helicase which is a subunit of the eIF4F complex involved in cap recognition and is required for mRNA binding to ribosome. In the current model of translation initiation, eIF4A unwinds RNA secondary structures in the 5'-UTR of mRNAs which is necessary to allow efficient binding of the small ribosomal subunit, and subsequent scanning for the initiator codon. This chain is Eukaryotic initiation factor 4A-13, found in Nicotiana tabacum (Common tobacco).